The following is a 923-amino-acid chain: Leucine--tRNA ligase (923 aa).

The short motif at 41–52 is the 'HIGH' region element; sequence PYPSGEGLHVGH. A 'KMSKS' region motif is present at residues 698 to 702; it reads KMSKS. Residue Lys-701 coordinates ATP.

The protein belongs to the class-I aminoacyl-tRNA synthetase family.

Its subcellular location is the cytoplasm. It catalyses the reaction tRNA(Leu) + L-leucine + ATP = L-leucyl-tRNA(Leu) + AMP + diphosphate. The sequence is that of Leucine--tRNA ligase from Amoebophilus asiaticus (strain 5a2).